Reading from the N-terminus, the 157-residue chain is UPF0262 protein Atu0536 (157 aa).

Belongs to the UPF0262 family.

The chain is UPF0262 protein Atu0536 from Agrobacterium fabrum (strain C58 / ATCC 33970) (Agrobacterium tumefaciens (strain C58)).